The following is a 506-amino-acid chain: MEEFKRNLELDRSQQYDFIYPLIFQEYIYALAHDRVLKRSFFLENAGYNDKSSLLIVKRLITHLITQMYQQNHFLFSVNDSKQNPILGYNRNFYSQTIFEGFAVVVEIPFYLRLLSFLEGKERVKSYNLRSIHSIFPFLEAQIFHLNNILDILIPHPIHLEILVQTLRYWVKDASSLHFLRFFLYKYPIWNSLITPKKSSFSFSKRNQRFFLFLYNFHVSEYESIFVFLRTQSSHLLSISFETFLERISFYKKIELEVFTKSFKAILWVFKEPFLHYVRYRGKVILASKGTSFLMNKWKYYLVSFWQCYFYIWSQPIRIHINQLSNHSLDFLDYLSSVRLKPLMVRSQMIENAFLIETASKKFDTLIPITPMIGSLSKAQFCNVIGHPISKPVWAALSDSDIIERFAHIYRNISHYHSGYVKKKNLYRIKYILRLSCARTLARKHKSTVRAFSKRLGMGLLEEFFTDEEQVFYLTFPKASSTSGELYGRRIWYLDIICINDLANYE.

The protein belongs to the intron maturase 2 family. MatK subfamily.

It localises to the plastid. The protein resides in the chloroplast. Usually encoded in the trnK tRNA gene intron. Probably assists in splicing its own and other chloroplast group II introns. In Erica tetralix (Cross-leaved heath), this protein is Maturase K.